A 184-amino-acid chain; its full sequence is NADH-quinone oxidoreductase subunit B (184 aa).

4 residues coordinate [4Fe-4S] cluster: Cys63, Cys64, Cys128, and Cys158.

It belongs to the complex I 20 kDa subunit family. In terms of assembly, NDH-1 is composed of 14 different subunits. Subunits NuoB, C, D, E, F, and G constitute the peripheral sector of the complex. The cofactor is [4Fe-4S] cluster.

The protein resides in the cell inner membrane. The enzyme catalyses a quinone + NADH + 5 H(+)(in) = a quinol + NAD(+) + 4 H(+)(out). NDH-1 shuttles electrons from NADH, via FMN and iron-sulfur (Fe-S) centers, to quinones in the respiratory chain. The immediate electron acceptor for the enzyme in this species is believed to be ubiquinone. Couples the redox reaction to proton translocation (for every two electrons transferred, four hydrogen ions are translocated across the cytoplasmic membrane), and thus conserves the redox energy in a proton gradient. The chain is NADH-quinone oxidoreductase subunit B from Xanthomonas oryzae pv. oryzae (strain MAFF 311018).